The sequence spans 701 residues: Pre-mRNA-splicing factor CLF1 (701 aa).

HAT repeat units lie at residues 43-75 (SYQQ…WEIE), 78-110 (HDFP…LELS), 112-144 (KNIN…TEEM), 146-177 (KNYP…FEAR), 179-210 (EEKE…YEME), 214-253 (DDVN…SWTS), 266-299 (EIFK…FEKN), 309-341 (SVLI…LLQN), 343-378 (SNKS…FWIW), 388-424 (NNPV…FELR), 545-576 (MQYD…FESS), and 601-642 (SQIE…VNGS).

This sequence belongs to the crooked-neck family. In terms of assembly, associated with the spliceosome.

The protein localises to the nucleus. Functionally, involved in pre-mRNA splicing and cell cycle progression. Required for the spliceosome assembly and initiation of the DNA replication. The chain is Pre-mRNA-splicing factor CLF1 (CLF1) from Candida albicans (strain SC5314 / ATCC MYA-2876) (Yeast).